The sequence spans 367 residues: Pepsin A (367 aa).

Positions serine 1–leucine 42 are cleaved as a propeptide — activation peptide. Residues tyrosine 59–serine 364 enclose the Peptidase A1 domain. The active site involves aspartate 77. A disulfide bridge links cysteine 90 with cysteine 95. N-linked (GlcNAc...) asparagine glycosylation occurs at asparagine 113. Cysteine 251 and cysteine 255 are joined by a disulfide. Aspartate 260 is a catalytic residue. The cysteines at positions 290 and 323 are disulfide-linked.

Belongs to the peptidase A1 family.

The enzyme catalyses Preferential cleavage: hydrophobic, preferably aromatic, residues in P1 and P1' positions. Cleaves 1-Phe-|-Val-2, 4-Gln-|-His-5, 13-Glu-|-Ala-14, 14-Ala-|-Leu-15, 15-Leu-|-Tyr-16, 16-Tyr-|-Leu-17, 23-Gly-|-Phe-24, 24-Phe-|-Phe-25 and 25-Phe-|-Tyr-26 bonds in the B chain of insulin.. Its function is as follows. Shows particularly broad specificity; although bonds involving phenylalanine and leucine are preferred, many others are also cleaved to some extent. In Gallus gallus (Chicken), this protein is Pepsin A (PGA).